A 134-amino-acid chain; its full sequence is Interleukin-5 (134 aa).

Positions 1–21 (MRMLLNLSLLALGAAYVSAFA) are cleaved as a signal peptide. N76 and N90 each carry an N-linked (GlcNAc...) asparagine glycan.

This sequence belongs to the IL-5 family. In terms of assembly, homodimer; disulfide-linked. Interacts with IL5RA. Interacts with CSF2RB.

The protein localises to the secreted. Homodimeric cytokine expressed predominantly by T-lymphocytes and NK cells that plays an important role in the survival, differentiation, and chemotaxis of eosinophils. Also acts on activated and resting B-cells to induce immunoglobulin production, growth, and differentiation. Mechanistically, exerts its biological effects through a receptor composed of IL5RA subunit and the cytokine receptor common subunit beta/CSF2RB. Binding to the receptor leads to activation of various kinases including LYN, SYK and JAK2 and thereby propagates signals through the RAS-MAPK and JAK-STAT5 pathways respectively. The sequence is that of Interleukin-5 (IL5) from Canis lupus familiaris (Dog).